Here is a 167-residue protein sequence, read N- to C-terminus: NAD(P)H-quinone oxidoreductase subunit I, chloroplastic (167 aa).

2 4Fe-4S ferredoxin-type domains span residues 55 to 84 and 95 to 124; these read GRIH…VDWK and LNYS…MTEE. Cys-64, Cys-67, Cys-70, Cys-74, Cys-104, Cys-107, Cys-110, and Cys-114 together coordinate [4Fe-4S] cluster.

It belongs to the complex I 23 kDa subunit family. In terms of assembly, NDH is composed of at least 16 different subunits, 5 of which are encoded in the nucleus. [4Fe-4S] cluster serves as cofactor.

It localises to the plastid. Its subcellular location is the chloroplast thylakoid membrane. The enzyme catalyses a plastoquinone + NADH + (n+1) H(+)(in) = a plastoquinol + NAD(+) + n H(+)(out). The catalysed reaction is a plastoquinone + NADPH + (n+1) H(+)(in) = a plastoquinol + NADP(+) + n H(+)(out). Its function is as follows. NDH shuttles electrons from NAD(P)H:plastoquinone, via FMN and iron-sulfur (Fe-S) centers, to quinones in the photosynthetic chain and possibly in a chloroplast respiratory chain. The immediate electron acceptor for the enzyme in this species is believed to be plastoquinone. Couples the redox reaction to proton translocation, and thus conserves the redox energy in a proton gradient. This Vitis vinifera (Grape) protein is NAD(P)H-quinone oxidoreductase subunit I, chloroplastic.